Here is a 33-residue protein sequence, read N- to C-terminus: VTCFCRRRGCASRERLIGYCRFGNTIYGLCCRR.

3 disulfide bridges follow: Cys-3–Cys-31, Cys-5–Cys-20, and Cys-10–Cys-30.

The protein belongs to the alpha-defensin family.

It is found in the secreted. Its function is as follows. Anti-fungal and bactericidal activity, greater against Gram-positive bacteria. This chain is Neutrophil defensin 3, found in Mesocricetus auratus (Golden hamster).